The primary structure comprises 185 residues: MMGKLIWLMGPSGSGKDSLLAELRLREQTQLLVAHRYITRDASAGSENHIALSEQEFFTRAGQNLLALSWHANGLYYGVGVEIDLWLHAGFDVLVNGSRAHLPQARARYQSALLPVCLQVSPEILRQRLENRGRENASEINARLARAARYTPQDCHTLNNDGSLRQSVDTLLTLIHQKEKHHACL.

Position 10-17 (10-17 (GPSGSGKD)) interacts with ATP.

The protein belongs to the ribose 1,5-bisphosphokinase family.

It carries out the reaction alpha-D-ribose 1,5-bisphosphate + ATP = 5-phospho-alpha-D-ribose 1-diphosphate + ADP. The protein operates within metabolic intermediate biosynthesis; 5-phospho-alpha-D-ribose 1-diphosphate biosynthesis; 5-phospho-alpha-D-ribose 1-diphosphate from D-ribose 5-phosphate (route II): step 3/3. Catalyzes the phosphorylation of ribose 1,5-bisphosphate to 5-phospho-D-ribosyl alpha-1-diphosphate (PRPP). Accepts ATP but not GTP as a phosphoryl donor, and uses ribose 1,5-bisphosphate but not ribose, ribose 1-phosphate, or ribose 5-phosphate as a phosphoryl acceptor. The chain is Ribose 1,5-bisphosphate phosphokinase PhnN (phnN) from Escherichia coli (strain K12).